The following is a 383-amino-acid chain: BRISC and BRCA1-A complex member 2 (383 aa).

Met-1 is subject to N-acetylmethionine. Ser-2 is modified (phosphoserine). UEV-like regions lie at residues 30–147 and 275–364; these read DATN…TLLE and IAAF…RAKA.

This sequence belongs to the BABAM2 family. In terms of assembly, component of the ARISC complex, at least composed of UIMC1/RAP80, ABRAXAS1, BRCC3/BRCC36, BABAM2 and BABAM1/NBA1. Component of the BRCA1-A complex, at least composed of BRCA1, BARD1, UIMC1/RAP80, ABRAXAS1, BRCC3/BRCC36, BABAM2 and BABAM1/NBA1. In the BRCA1-A complex, interacts directly with ABRAXAS1, BRCC3/BRCC36 and BABAM1/NBA1. Binds polyubiquitin. Component of the BRISC complex, at least composed of ABRAXAS2, BRCC3/BRCC36, BABAM2 and BABAM1/NBA1. Identified in a complex with SHMT2 and the other subunits of the BRISC complex. Component of the BRCA1/BRCA2 containing complex (BRCC), which also contains BRCA1, BRCA2, BARD1, BRCC3/BRCC36 and RAD51. BRCC is a ubiquitin E3 ligase complex that enhances cellular survival following DNA damage. May interact with FAS and TNFRSF1A. As to expression, expressed in all cell lines examined. Highly expressed in placenta.

The protein resides in the cytoplasm. It localises to the nucleus. Its function is as follows. Component of the BRCA1-A complex, a complex that specifically recognizes 'Lys-63'-linked ubiquitinated histones H2A and H2AX at DNA lesions sites, leading to target the BRCA1-BARD1 heterodimer to sites of DNA damage at double-strand breaks (DSBs). The BRCA1-A complex also possesses deubiquitinase activity that specifically removes 'Lys-63'-linked ubiquitin on histones H2A and H2AX. In the BRCA1-A complex, it acts as an adapter that bridges the interaction between BABAM1/NBA1 and the rest of the complex, thereby being required for the complex integrity and modulating the E3 ubiquitin ligase activity of the BRCA1-BARD1 heterodimer. Component of the BRISC complex, a multiprotein complex that specifically cleaves 'Lys-63'-linked ubiquitin in various substrates. Within the BRISC complex, acts as an adapter that bridges the interaction between BABAM1/NBA1 and the rest of the complex, thereby being required for the complex integrity. The BRISC complex is required for normal mitotic spindle assembly and microtubule attachment to kinetochores via its role in deubiquitinating NUMA1. The BRISC complex plays a role in interferon signaling via its role in the deubiquitination of the interferon receptor IFNAR1; deubiquitination increases IFNAR1 activity by enhancing its stability and cell surface expression. Down-regulates the response to bacterial lipopolysaccharide (LPS) via its role in IFNAR1 deubiquitination. May play a role in homeostasis or cellular differentiation in cells of neural, epithelial and germline origins. May also act as a death receptor-associated anti-apoptotic protein, which inhibits the mitochondrial apoptotic pathway. May regulate TNF-alpha signaling through its interactions with TNFRSF1A; however these effects may be indirect. The protein is BRISC and BRCA1-A complex member 2 of Homo sapiens (Human).